A 379-amino-acid chain; its full sequence is L-demethylnoviosyl transferase (379 aa).

This sequence belongs to the glycosyltransferase 28 family.

The catalysed reaction is dTDP-4-O-demethyl-beta-L-noviose + novobiocic acid = desmethyldescarbamoylnovobiocin + dTDP + H(+). Its pathway is antibiotic biosynthesis; novobiocin biosynthesis. With respect to regulation, inhibited by TDP-L-rhamnose, the sugar donor that most closely structurally resembles the natural substrate dTDP-beta-L-noviose. In terms of biological role, catalyzes the transfer of L-noviose from dTDP-4-O-demethyl-beta-L-noviose to the phenolic oxygen of novobiocic acid, creating the full ABC ring system in the novobiocin biosynthesis pathway. Novobiocin is an aminocoumarin family antibiotic that targets bacterial DNA gyrases. Also shows activity with variant coumarin aglycones, suggesting it may be a promiscuous catalyst for noviosylation of a range of planar scaffolds. Does not show activity with TDP-L-rhamnose. This Streptomyces niveus (Streptomyces spheroides) protein is L-demethylnoviosyl transferase (novM).